Reading from the N-terminus, the 73-residue chain is NAD(P)H-quinone oxidoreductase subunit L (73 aa).

The next 2 membrane-spanning stretches (helical) occupy residues 7 to 27 (LIGL…PFLF) and 44 to 64 (VLMF…APFM).

It belongs to the complex I NdhL subunit family. In terms of assembly, NDH-1 can be composed of about 15 different subunits; different subcomplexes with different compositions have been identified which probably have different functions.

Its subcellular location is the cellular thylakoid membrane. It catalyses the reaction a plastoquinone + NADH + (n+1) H(+)(in) = a plastoquinol + NAD(+) + n H(+)(out). The enzyme catalyses a plastoquinone + NADPH + (n+1) H(+)(in) = a plastoquinol + NADP(+) + n H(+)(out). Its function is as follows. NDH-1 shuttles electrons from an unknown electron donor, via FMN and iron-sulfur (Fe-S) centers, to quinones in the respiratory and/or the photosynthetic chain. The immediate electron acceptor for the enzyme in this species is believed to be plastoquinone. Couples the redox reaction to proton translocation, and thus conserves the redox energy in a proton gradient. Cyanobacterial NDH-1 also plays a role in inorganic carbon-concentration. This Synechococcus sp. (strain JA-3-3Ab) (Cyanobacteria bacterium Yellowstone A-Prime) protein is NAD(P)H-quinone oxidoreductase subunit L.